Reading from the N-terminus, the 172-residue chain is RNA silencing suppressor p19 (172 aa).

Basic and acidic residues predominate over residues 1 to 20 (MERAIQGNDTREQANGERWD). A disordered region spans residues 1–27 (MERAIQGNDTREQANGERWDGGSGGIT).

The protein belongs to the tombusvirus protein p19 family. In terms of assembly, homodimer.

Its function is as follows. Acts as a suppressor of RNA-mediated gene silencing, also known as post-transcriptional gene silencing (PTGS), a mechanism of plant viral defense that limits the accumulation of viral RNAs. Binds to short interfering RNAs (siRNAs) with high affinity. Acts as a molecular caliper to specifically select siRNAs based on the length of the duplex region of the RNA. This is RNA silencing suppressor p19 from Dianthus caryophyllus (Carnation).